An 814-amino-acid polypeptide reads, in one-letter code: Phosphatidylinositol 3-kinase VPS34 (814 aa).

One can recognise a C2 PI3K-type domain in the interval L25–G177. In terms of domain architecture, PIK helical spans D274–N449. The 268-residue stretch at V532–F799 folds into the PI3K/PI4K catalytic domain. The G-loop stretch occupies residues L538–H544. Positions G668 to N676 are catalytic loop. The interval H687–C708 is activation loop.

It belongs to the PI3/PI4-kinase family. As to quaternary structure, interacts with VPS15. Component of a complex made of VPS38/USL1 and PI3K main subunits such as VPS15, ATG6/VPS30 and VPS34. Binds directly to VPS38/USL1.

It catalyses the reaction a 1,2-diacyl-sn-glycero-3-phospho-(1D-myo-inositol) + ATP = a 1,2-diacyl-sn-glycero-3-phospho-(1D-myo-inositol-3-phosphate) + ADP + H(+). Its activity is regulated as follows. The PI3K inhibitor LY294002 affects phosphatidylinositol 3-phosphate (PI3P) levels and triggers a decrease in proline, hydrophobic and aromatic amino acids, and sugars (e.g. raffinose) accumulation in response to salt treatment correlated with lower P5CS1 expression and higher ProDH1 expression, genes involved in proline biosynthesis and catabolism, respectively. In terms of biological role, involved in the negative regulation of proline, hydrophobic and aromatic amino acids accumulation, especially in response to salt (NaCl), either through inhibition of their synthesis and/or promotion of their catabolism. Triggers defense responses (e.g. pathogenesis related (PR1 and PR5) gene expression and hydrogen peroxide H(2)O(2) burst) to the bacterial pathogen compatible Pseudomonas syringae pv tomato DC3000 (Pst DC3000) and incompatible Pst DC3000 (avrRpt2), by regulating reactive ogygen species (ROS) production and by promoting stomatal closure. This Arabidopsis thaliana (Mouse-ear cress) protein is Phosphatidylinositol 3-kinase VPS34.